Reading from the N-terminus, the 421-residue chain is Meiotic fizzy-related protein 1 (421 aa).

Positions 79–107 (DTPDRKSYSLSPISPQSQDMLRQPQKPKR) are disordered. Over residues 86-98 (YSLSPISPQSQDM) the composition is skewed to polar residues. 7 WD repeats span residues 123 to 160 (KNDF…VVQL), 164 to 203 (GATN…SVRS), 206 to 246 (GHSE…EMMK), 247 to 286 (VHEQ…PLHK), 289 to 331 (EHTA…LQNK), 333 to 374 (DTGS…NIAN), and 377 to 416 (AHTN…PKEE).

Belongs to the WD repeat CDC20/Fizzy family. Interacts with mes1.

Its subcellular location is the nucleus. In terms of biological role, meiosis-specific activator of the anaphase promoting complex/cyclosome (APC/C). Involved in cdc13 degradation. The polypeptide is Meiotic fizzy-related protein 1 (mfr1) (Schizosaccharomyces pombe (strain 972 / ATCC 24843) (Fission yeast)).